Reading from the N-terminus, the 58-residue chain is Large ribosomal subunit protein bL32 (58 aa).

Residues 1–19 (MAVPKKRTSKSKKNMRKAN) are compositionally biased toward basic residues. The segment at 1 to 58 (MAVPKKRTSKSKKNMRKANWKNQAKLAAKKALSLGKSVETQRSHSFVHPRYEEEEEED) is disordered. Residues 20–32 (WKNQAKLAAKKAL) are compositionally biased toward low complexity.

The protein belongs to the bacterial ribosomal protein bL32 family.

This is Large ribosomal subunit protein bL32 from Trichodesmium erythraeum (strain IMS101).